The chain runs to 426 residues: Glutamyl-tRNA reductase (426 aa).

Substrate is bound by residues 49–52 (TCNR), serine 101, 106–108 (EPQ), and glutamine 112. Catalysis depends on cysteine 50, which acts as the Nucleophile. Position 181–186 (181–186 (GAGETI)) interacts with NADP(+). The segment at 405–426 (RLFPEKPGYQHPPHSYPDREDR) is disordered.

The protein belongs to the glutamyl-tRNA reductase family. As to quaternary structure, homodimer.

The enzyme catalyses (S)-4-amino-5-oxopentanoate + tRNA(Glu) + NADP(+) = L-glutamyl-tRNA(Glu) + NADPH + H(+). Its pathway is porphyrin-containing compound metabolism; protoporphyrin-IX biosynthesis; 5-aminolevulinate from L-glutamyl-tRNA(Glu): step 1/2. In terms of biological role, catalyzes the NADPH-dependent reduction of glutamyl-tRNA(Glu) to glutamate 1-semialdehyde (GSA). This is Glutamyl-tRNA reductase from Xanthomonas axonopodis pv. citri (strain 306).